A 341-amino-acid chain; its full sequence is Inositol 2-dehydrogenase (341 aa).

Belongs to the Gfo/Idh/MocA family. In terms of assembly, homotetramer.

It catalyses the reaction myo-inositol + NAD(+) = scyllo-inosose + NADH + H(+). In terms of biological role, involved in the oxidation of myo-inositol (MI) to 2-keto-myo-inositol (2KMI or 2-inosose). The sequence is that of Inositol 2-dehydrogenase from Acidothermus cellulolyticus (strain ATCC 43068 / DSM 8971 / 11B).